Here is a 231-residue protein sequence, read N- to C-terminus: NADH-ubiquinone oxidoreductase chain 4 (231 aa).

The next 6 helical transmembrane spans lie at 1 to 21 (PIAG…YGII), 34 to 54 (LFLP…LTCL), 61 to 80 (SLIA…AIII), 84 to 106 (WGLS…LFCL), 128 to 148 (ILPM…ATPP), and 169 to 189 (TIIL…HMFL).

The protein belongs to the complex I subunit 4 family.

Its subcellular location is the mitochondrion membrane. It catalyses the reaction a ubiquinone + NADH + 5 H(+)(in) = a ubiquinol + NAD(+) + 4 H(+)(out). Functionally, core subunit of the mitochondrial membrane respiratory chain NADH dehydrogenase (Complex I) that is believed to belong to the minimal assembly required for catalysis. Complex I functions in the transfer of electrons from NADH to the respiratory chain. The immediate electron acceptor for the enzyme is believed to be ubiquinone. This Metlapilcoatlus nummifer (Mexican jumping pitviper) protein is NADH-ubiquinone oxidoreductase chain 4 (MT-ND4).